The primary structure comprises 410 residues: Proteasome-activating nucleotidase (410 aa).

A coiled-coil region spans residues 1–70 (MENNSQNVLK…LRGEIERFRT (70 aa)). Residues 195–200 (GTGKTL) and histidine 334 contribute to the ATP site. The tract at residues 408-410 (MFG) is docks into pockets in the proteasome alpha-ring to cause gate opening.

This sequence belongs to the AAA ATPase family. As to quaternary structure, homohexamer. The hexameric complex has a two-ring architecture resembling a top hat that caps the 20S proteasome core at one or both ends. Upon ATP-binding, the C-terminus of PAN interacts with the alpha-rings of the proteasome core by binding to the intersubunit pockets.

It localises to the cytoplasm. In terms of biological role, ATPase which is responsible for recognizing, binding, unfolding and translocation of substrate proteins into the archaeal 20S proteasome core particle. Is essential for opening the gate of the 20S proteasome via an interaction with its C-terminus, thereby allowing substrate entry and access to the site of proteolysis. Thus, the C-termini of the proteasomal ATPase function like a 'key in a lock' to induce gate opening and therefore regulate proteolysis. Unfolding activity requires energy from ATP hydrolysis, whereas ATP binding alone promotes ATPase-20S proteasome association which triggers gate opening, and supports translocation of unfolded substrates. This is Proteasome-activating nucleotidase from Methanothermobacter thermautotrophicus (strain ATCC 29096 / DSM 1053 / JCM 10044 / NBRC 100330 / Delta H) (Methanobacterium thermoautotrophicum).